Here is a 418-residue protein sequence, read N- to C-terminus: Serpin A9 (418 aa).

The signal sequence occupies residues Met1 to Ser25. N-linked (GlcNAc...) asparagine glycans are attached at residues Asn103, Asn213, and Asn224.

This sequence belongs to the serpin family.

It localises to the secreted. This is Serpin A9 (Serpina9) from Mus musculus (Mouse).